We begin with the raw amino-acid sequence, 230 residues long: Orotidine 5'-phosphate decarboxylase (230 aa).

Substrate-binding positions include Asp-10, Lys-32, 59–68 (DLKYHDIPNT), Thr-119, Arg-180, Gln-189, Gly-209, and Arg-210. Lys-61 (proton donor) is an active-site residue.

Belongs to the OMP decarboxylase family. Type 1 subfamily. In terms of assembly, homodimer.

The catalysed reaction is orotidine 5'-phosphate + H(+) = UMP + CO2. Its pathway is pyrimidine metabolism; UMP biosynthesis via de novo pathway; UMP from orotate: step 2/2. Catalyzes the decarboxylation of orotidine 5'-monophosphate (OMP) to uridine 5'-monophosphate (UMP). The sequence is that of Orotidine 5'-phosphate decarboxylase from Haemophilus ducreyi (strain 35000HP / ATCC 700724).